The chain runs to 185 residues: Threonylcarbamoyl-AMP synthase (185 aa).

The YrdC-like domain occupies 5-185; that stretch reads ADRIADAVAA…DLQSGETLRR (181 aa).

The protein belongs to the SUA5 family. TsaC subfamily.

The protein resides in the cytoplasm. It carries out the reaction L-threonine + hydrogencarbonate + ATP = L-threonylcarbamoyladenylate + diphosphate + H2O. Its function is as follows. Required for the formation of a threonylcarbamoyl group on adenosine at position 37 (t(6)A37) in tRNAs that read codons beginning with adenine. Catalyzes the conversion of L-threonine, HCO(3)(-)/CO(2) and ATP to give threonylcarbamoyl-AMP (TC-AMP) as the acyladenylate intermediate, with the release of diphosphate. This chain is Threonylcarbamoyl-AMP synthase, found in Chromohalobacter salexigens (strain ATCC BAA-138 / DSM 3043 / CIP 106854 / NCIMB 13768 / 1H11).